Here is a 553-residue protein sequence, read N- to C-terminus: Transcription factor IIIB 70 kDa subunit (553 aa).

Residues 6–39 (KQQKCKTCGHTQFDVNRYTAAGDVSCLRCGTVLE) form a TFIIB-type zinc finger. Zn(2+) contacts are provided by C10, C13, C31, and C34. Repeat copies occupy residues 98–174 (IAAA…KMVK) and 193–272 (FVEK…EFKK). Residues 98 to 272 (IAAALKIPDY…LQRRLNEFKK (175 aa)) are interaction with TBP and with the Pol III subunit C34. Positions 281–553 (KSFREVENLE…KGLLGGNMGF (273 aa)) are interaction with TBP. Residues 473-523 (KQEADELTGNTSKSSSGNRRKRNKSSLPAELRKELGDIDLDEDGTPRSAAD) are disordered. The segment covering 480-489 (TGNTSKSSSG) has biased composition (low complexity).

It belongs to the TFIIB family. In terms of assembly, TFIIIB comprises the TATA-binding protein (TBP), the B-related factor (BRF) and a 70 kDa polypeptide.

The protein resides in the nucleus. Functionally, general activator of RNA polymerase III transcription. Interacts with TBP. Binds to Pol III subunit C34 and to the TAU135 component of TFIIIC. In Candida albicans (strain SC5314 / ATCC MYA-2876) (Yeast), this protein is Transcription factor IIIB 70 kDa subunit (TDS4).